The chain runs to 607 residues: Glutamine--fructose-6-phosphate aminotransferase [isomerizing] (607 aa).

Cys2 serves as the catalytic Nucleophile; for GATase activity. Residues Cys2–Asn217 form the Glutamine amidotransferase type-2 domain. 2 SIS domains span residues Ile283–Ala422 and Val455–Pro597. Residue Lys602 is the For Fru-6P isomerization activity of the active site.

In terms of assembly, homodimer.

The protein resides in the cytoplasm. The catalysed reaction is D-fructose 6-phosphate + L-glutamine = D-glucosamine 6-phosphate + L-glutamate. In terms of biological role, catalyzes the first step in hexosamine metabolism, converting fructose-6P into glucosamine-6P using glutamine as a nitrogen source. The chain is Glutamine--fructose-6-phosphate aminotransferase [isomerizing] from Brucella suis biovar 1 (strain 1330).